Here is a 632-residue protein sequence, read N- to C-terminus: MHGLLLAAGLLSLPLRVLAHPQPSTSLTSQGVDLNAYRMADRSSYMSSDEMKLEQPSISSLSGGNYVETATEVVKRMMPGVTFRMVDDHYVGESGISHVYFRQTMHGMDIDNSDFNVNIGKDGKVLSFGNSFYTNPTPDKAPVEKRDFSDPMKALHGARKALNLPINADKATIKSMNEHEVMFMGTSGALSDPQGKLCYMAKEDGTLALTWRVETDMGDNWLLSYVDAKDTDKVHNVVDYVSHATYQVYPWPVPDPTEGKRAVLQNPWNLKASPFTWISDGKNNYSTTRGNNAIAQANFDGGSDYLNNYRPNNKNLKFEYPYAPNMSPPKSYIDASVTQLFYSANMVHDLYYMLGFTEKAGNFQVNNRNQGGKGGDFVILNAQDGSGTNNANFATPPDGQPGRMRVYIWTKAKPARDSSFEAGTVIHEYTHGLSNRLCGGPANSACLNGMESGGMGEGWGDFFATAIRLKPNDNRNANYVHGEWVNNSPRGNRMFPYSTSLQTNPLVYTSCNKYNEVHAIGTVWCSILYEVLWNLIDKHGKNDGPTPVFENGVPKDGKYLAMKLVLDGMAIQPCKPTFVQARNAILDADMNLTKGANKCELWKAFAKRGLGTGAKYDPKNRTGSKAVPKECQ.

The signal sequence occupies residues 1-19 (MHGLLLAAGLLSLPLRVLA). A propeptide spanning residues 20–243 (HPQPSTSLTS…VHNVVDYVSH (224 aa)) is cleaved from the precursor. Asn284 carries an N-linked (GlcNAc...) asparagine glycan. His427 provides a ligand contact to Zn(2+). The active site involves Glu428. His431 is a Zn(2+) binding site. N-linked (GlcNAc...) asparagine glycosylation is found at Asn591 and Asn620.

The protein belongs to the peptidase M36 family. Requires Zn(2+) as cofactor.

Its subcellular location is the secreted. Secreted metalloproteinase that allows assimilation of proteinaceous substrates and probably acts as a virulence factor. This chain is Extracellular metalloproteinase 1 (MEP1), found in Arthroderma gypseum (strain ATCC MYA-4604 / CBS 118893) (Microsporum gypseum).